Consider the following 184-residue polypeptide: Probable cobalt-precorrin-6B C(15)-methyltransferase (decarboxylating) (184 aa).

Residues T12, 36–40 (GCGTG), D59, and A87 each bind S-adenosyl-L-methionine.

This sequence belongs to the methyltransferase superfamily. Archaeal-type CbiT family.

It carries out the reaction Co-precorrin-6B + S-adenosyl-L-methionine = Co-precorrin-7 + S-adenosyl-L-homocysteine + CO2. The protein operates within cofactor biosynthesis; adenosylcobalamin biosynthesis; cob(II)yrinate a,c-diamide from sirohydrochlorin (anaerobic route): step 8/10. Its function is as follows. Catalyzes the methylation of C-15 in cobalt-precorrin-6B followed by the decarboxylation of C-12 to form cobalt-precorrin-7. The sequence is that of Probable cobalt-precorrin-6B C(15)-methyltransferase (decarboxylating) from Methanosarcina acetivorans (strain ATCC 35395 / DSM 2834 / JCM 12185 / C2A).